The sequence spans 578 residues: Arginine--tRNA ligase (578 aa).

Positions 127–137 (PNLAKEMHVGH) match the 'HIGH' region motif.

It belongs to the class-I aminoacyl-tRNA synthetase family. As to quaternary structure, monomer.

The protein localises to the cytoplasm. The enzyme catalyses tRNA(Arg) + L-arginine + ATP = L-arginyl-tRNA(Arg) + AMP + diphosphate. The chain is Arginine--tRNA ligase from Pseudomonas syringae pv. tomato (strain ATCC BAA-871 / DC3000).